The chain runs to 594 residues: Zinc finger protein 467 (594 aa).

Positions Met-1 to Val-86 are disordered. The tract at residues Met-1–Arg-183 is interaction with STAT3. Polar residues predominate over residues Ser-31–Ser-47. Over residues Pro-54–Gln-64 the composition is skewed to basic and acidic residues. Lys-97 participates in a covalent cross-link: Glycyl lysine isopeptide (Lys-Gly) (interchain with G-Cter in SUMO2). 12 consecutive C2H2-type zinc fingers follow at residues Tyr-160–His-182, Cys-188–His-210, Phe-216–His-238, Tyr-244–His-266, Phe-272–His-294, Tyr-300–His-322, Phe-355–His-377, Phe-430–His-452, Phe-458–His-480, Phe-486–His-508, His-514–His-536, and Phe-542–His-564. The disordered stretch occupies residues Gln-313–Gly-351. Residue Lys-368 forms a Glycyl lysine isopeptide (Lys-Gly) (interchain with G-Cter in SUMO2) linkage.

This sequence belongs to the krueppel C2H2-type zinc-finger protein family. As to quaternary structure, interacts with STAT3. Enhances STAT3 activity by keeping it in the nucleus.

Its subcellular location is the nucleus. Functionally, transcription factor that promotes adipocyte differentiation and suppresses osteoblast differentiation in the bone marrow. Enhances the osteoclast-supporting ability of stromal cells. Binds with STAT3 the consensus sequence 5'-CTTCTGGGAAGA-3' of the acute phase response element (APRE). Transactivates several promoters including FOS, OSM and PPARG. Recruits a histone deacetylase complex. The protein is Zinc finger protein 467 (Znf467) of Mus musculus (Mouse).